Here is a 420-residue protein sequence, read N- to C-terminus: D-tagatose-1,6-bisphosphate aldolase subunit GatZ (420 aa).

The protein belongs to the GatZ/KbaZ family. GatZ subfamily. In terms of assembly, forms a complex with GatY.

It participates in carbohydrate metabolism; D-tagatose 6-phosphate degradation; D-glyceraldehyde 3-phosphate and glycerone phosphate from D-tagatose 6-phosphate: step 2/2. In terms of biological role, component of the tagatose-1,6-bisphosphate aldolase GatYZ that is required for full activity and stability of the Y subunit. Could have a chaperone-like function for the proper and stable folding of GatY. When expressed alone, GatZ does not show any aldolase activity. Is involved in the catabolism of galactitol. The sequence is that of D-tagatose-1,6-bisphosphate aldolase subunit GatZ from Escherichia coli (strain SE11).